We begin with the raw amino-acid sequence, 226 residues long: Ribonuclease 3 (226 aa).

The RNase III domain maps to 5-127 (TFQRGDPIGH…IVAAIYLDCG (123 aa)). Residue Glu40 coordinates Mg(2+). The active site involves Asp44. Residues Asp113 and Glu116 each contribute to the Mg(2+) site. The active site involves Glu116. The 71-residue stretch at 154-224 (DPKTRLQEWL…ATLVIAQLDS (71 aa)) folds into the DRBM domain.

This sequence belongs to the ribonuclease III family. Homodimer. Mg(2+) is required as a cofactor.

The protein resides in the cytoplasm. The enzyme catalyses Endonucleolytic cleavage to 5'-phosphomonoester.. In terms of biological role, digests double-stranded RNA. Involved in the processing of primary rRNA transcript to yield the immediate precursors to the large and small rRNAs (23S and 16S). Processes some mRNAs, and tRNAs when they are encoded in the rRNA operon. Processes pre-crRNA and tracrRNA of type II CRISPR loci if present in the organism. The sequence is that of Ribonuclease 3 from Xanthomonas axonopodis pv. citri (strain 306).